Reading from the N-terminus, the 449-residue chain is Glucose-6-phosphate isomerase (449 aa).

Glu-291 acts as the Proton donor in catalysis. Catalysis depends on residues His-312 and Lys-426.

It belongs to the GPI family.

The protein localises to the cytoplasm. It catalyses the reaction alpha-D-glucose 6-phosphate = beta-D-fructose 6-phosphate. The protein operates within carbohydrate biosynthesis; gluconeogenesis. It participates in carbohydrate degradation; glycolysis; D-glyceraldehyde 3-phosphate and glycerone phosphate from D-glucose: step 2/4. Its function is as follows. Catalyzes the reversible isomerization of glucose-6-phosphate to fructose-6-phosphate. This Streptococcus gordonii (strain Challis / ATCC 35105 / BCRC 15272 / CH1 / DL1 / V288) protein is Glucose-6-phosphate isomerase.